The following is a 239-amino-acid chain: Ribosomal RNA small subunit methyltransferase G (239 aa).

Residues G77, F82, A128 to E129, and R147 each bind S-adenosyl-L-methionine. A disordered region spans residues I215 to G239. Residues R216–R227 show a composition bias toward basic residues.

It belongs to the methyltransferase superfamily. RNA methyltransferase RsmG family.

It is found in the cytoplasm. Specifically methylates the N7 position of guanine in position 535 of 16S rRNA. This Bacillus velezensis (strain DSM 23117 / BGSC 10A6 / LMG 26770 / FZB42) (Bacillus amyloliquefaciens subsp. plantarum) protein is Ribosomal RNA small subunit methyltransferase G.